Here is a 187-residue protein sequence, read N- to C-terminus: Elongation factor P (187 aa).

Belongs to the elongation factor P family.

It is found in the cytoplasm. The protein operates within protein biosynthesis; polypeptide chain elongation. Its function is as follows. Involved in peptide bond synthesis. Stimulates efficient translation and peptide-bond synthesis on native or reconstituted 70S ribosomes in vitro. Probably functions indirectly by altering the affinity of the ribosome for aminoacyl-tRNA, thus increasing their reactivity as acceptors for peptidyl transferase. This chain is Elongation factor P, found in Roseobacter denitrificans (strain ATCC 33942 / OCh 114) (Erythrobacter sp. (strain OCh 114)).